Consider the following 167-residue polypeptide: UPF0114 protein in repA1-repA2 intergenic region (167 aa).

Transmembrane regions (helical) follow at residues 15–35, 53–73, and 136–156; these read LMFP…LKFF, LVLA…LVMV, and IMLC…MAYI.

Belongs to the UPF0114 family.

It is found in the cell membrane. This Buchnera aphidicola subsp. Schizaphis graminum (strain Sg) protein is UPF0114 protein in repA1-repA2 intergenic region.